A 974-amino-acid polypeptide reads, in one-letter code: MQLSATSGRTSFRVSQDLRTGPANFLSGLRDDDSLLRQVFFSILRHHHPNLAAKVDVIYALSQAWCTSQSDNDFELMVKYVSDLKPEERILVASSFSHMLNLHNLTEEVNSSQIGRAVRLGEMDSPTRDTNHSLLKLTTTNGFTPQQVYDTLCSQTVELVLTAHPTQALRASLLKKYAIVRRELDTLHSKRMSEYEKIETLEAIRAAVQAAWRTDEIRRSKPTPQDEMRSGLSYFSTVIFDVVPVFHRRVDTALEKLGLPRLPLDRALFKFGSWMGGDRDGNPNVTAETTRDVVVLARLEAVNVYFRQVEGLMFDLSIWRCSPEMKELAERLAAAESRDAARVAEERKRRNYVDFWAPIPPTEPFRVVLAHMRDRLYNTRQVLHQCLIHTHMSVRGALEEAGAYVDIEDMARPLKLMYDSLMSTGDESVANARLLDLLRQIRTFGLCMMGLDVRQESTRHTEVMDAVTTYLGLGSYASWDEPKRLAFLLGELQGKRPLMPPGMDMSPEVKEVVRTLRILSELPGDSLGAYIISMAKTASDVLAVVLLQRETGVRPALRVVPLFETLDDLHNAPGTMTTLLGNDWYRGHINGVQECMIGYSDSGKDAGRLAAAWALYETQEKLVEVAAGCGVRLVLFHGRGGTVGRGGGPTHMAIRSQPSGTINGHLRVTVQGEIIEQQFGEKEVCFRTLDLYTSAVLEAALDPPPAPAQEWRDLMSLLATESCDMYRSVVYRTPEFYDYFMQSTAASELGRLNIGSRPSSRKSGGIETLRAIPWIFAWTQQRLHLPVWLGIGEALEAAIDKGYGPVLQDMYANWPFFTSTLDLVEMVLAKADSRLSAFYERTLVDSSLAPLGQRLRELLAKTQQNILIVVRKSVLLEGNTPSQMSTPNLDEKIRLRSPYVAPLNVLQALSLQGLRKFRDGGDTEYNPSDPEIIDLLSRDPHKKGEGAQHPFVSAMDDCLMITIKGIAAGMQNTG.

Residues His-164 and Lys-604 contribute to the active site.

The protein belongs to the PEPCase type 1 family. Exists as a homotetramer or heterooligomer. Requires Mg(2+) as cofactor.

It localises to the cytoplasm. The enzyme catalyses oxaloacetate + phosphate = phosphoenolpyruvate + hydrogencarbonate. Activated by glutamine and dihydroxyacetone phosphate. Inhibited by glutamate, aspartate, 2-oxoglutarate and malate. Functionally, through the carboxylation of phosphoenolpyruvate (PEP) it forms oxaloacetate, a four-carbon dicarboxylic acid source for the tricarboxylic acid cycle. This Chlamydomonas reinhardtii (Chlamydomonas smithii) protein is Phosphoenolpyruvate carboxylase 1.